Here is a 172-residue protein sequence, read N- to C-terminus: MAEKRNIFLVGPMGAGKSTIGRHLAQQLHMEFVDSDTVIEERTGADISWVFDVEGEEGFRKREEAVLEDLTQEQGIVLATGGGSVKSKENRNRLSARGVVVYLETTIEKQLARTNRDKKRPLLQTDNPREVLEQLAEERNPLYEEVADYTVRTDDQSAKVVANQIVKMLEER.

14–19 provides a ligand contact to ATP; that stretch reads GAGKST. Mg(2+) is bound at residue Ser-18. The substrate site is built by Asp-36, Arg-60, and Gly-82. ATP is bound at residue Arg-120. Residue Arg-139 participates in substrate binding. Gln-156 contacts ATP.

This sequence belongs to the shikimate kinase family. In terms of assembly, monomer. Mg(2+) serves as cofactor.

The protein resides in the cytoplasm. The catalysed reaction is shikimate + ATP = 3-phosphoshikimate + ADP + H(+). The protein operates within metabolic intermediate biosynthesis; chorismate biosynthesis; chorismate from D-erythrose 4-phosphate and phosphoenolpyruvate: step 5/7. Catalyzes the specific phosphorylation of the 3-hydroxyl group of shikimic acid using ATP as a cosubstrate. The polypeptide is Shikimate kinase (Vibrio parahaemolyticus serotype O3:K6 (strain RIMD 2210633)).